A 122-amino-acid polypeptide reads, in one-letter code: MPTVKQLIRNARQPIRNARKTAALKGCPQRRGTCARVYNPKKPNSALRKVARVRLTSGFEITAYIPGIGHNLQEHSVVLVRGGRVKDLPGVRYRIIRGTLDAVAVKNRQQGRLQYGVKKPKK.

The protein belongs to the universal ribosomal protein uS12 family. As to quaternary structure, part of the 30S ribosomal subunit.

It is found in the plastid. It localises to the chloroplast. With S4 and S5 plays an important role in translational accuracy. Located at the interface of the 30S and 50S subunits. The protein is Small ribosomal subunit protein uS12cz/uS12cy (rps12-A) of Triticum aestivum (Wheat).